Reading from the N-terminus, the 220-residue chain is Histone deacetylase complex subunit SAP30 (220 aa).

An interaction with NCOR1 region spans residues 1–129; sequence MNGFTPDEMS…QSVRNRRKRK (129 aa). The residue at position 5 (T5) is a Phosphothreonine. The segment at 67–115 adopts an Atypical zinc-finger fold; sequence CCLREDGERCGRAAGNASFSKRIQKSISQKKVKIELDKSARHLYICDYH. K87 is covalently cross-linked (Glycyl lysine isopeptide (Lys-Gly) (interchain with G-Cter in SUMO2)). The disordered stretch occupies residues 123 to 143; it reads RNRRKRKGSDDDGGDSPVQDI. The interaction with SIN3A stretch occupies residues 130–220; the sequence is GSDDDGGDSP…SDLKVDSGVH (91 aa). A phosphoserine mark is found at S131 and S138. A Phosphothreonine modification is found at T145. Glycyl lysine isopeptide (Lys-Gly) (interchain with G-Cter in SUMO2) cross-links involve residues K194, K205, and K214.

This sequence belongs to the SAP30 family. As to quaternary structure, component of the histone deacetylase complex that includes at least SIN3A, HDAC1 and HDAC2. Found in a complex composed of at least SINHCAF, SIN3A, HDAC1, SAP30, RBBP4, OGT and TET1. Interacts with HDAC1. Interacts with SIN3A, SIN3B, HDAC2, RBBP4 and NCOR1. Interacts with SAMSN1. Interacts with HCFC1. Interacts with SAP30BP. In terms of tissue distribution, expressed in all tissues tested with highest levels in pancreas, ovary, PBL, spleen and thymus; lowest levels in brain, placenta, lung and kidney.

The protein localises to the nucleus. Involved in the functional recruitment of the Sin3-histone deacetylase complex (HDAC) to a specific subset of N-CoR corepressor complexes. Capable of transcription repression by N-CoR. Active in deacetylating core histone octamers (when in a complex) but inactive in deacetylating nucleosomal histones. In terms of biological role, (Microbial infection) Involved in transcriptional repression of HHV-1 genes TK and gC. This is Histone deacetylase complex subunit SAP30 from Homo sapiens (Human).